We begin with the raw amino-acid sequence, 82 residues long: Small ribosomal subunit protein bS18 (82 aa).

Residues Met-1–Cys-20 form a disordered region.

The protein belongs to the bacterial ribosomal protein bS18 family. Part of the 30S ribosomal subunit. Forms a tight heterodimer with protein bS6.

Functionally, binds as a heterodimer with protein bS6 to the central domain of the 16S rRNA, where it helps stabilize the platform of the 30S subunit. The protein is Small ribosomal subunit protein bS18 of Bartonella quintana (strain Toulouse) (Rochalimaea quintana).